Reading from the N-terminus, the 39-residue chain is GTWDDIGQGIGRVAYWVGKAMGNMSDVNQASRINRKKKH.

As to quaternary structure, bacteriocin activity requires interaction of alpha and beta peptides in a molar ratio of 7:1 or 8:1 respectively.

Functionally, kills Lactococci. This is Bacteriocin lactococcin-G subunit alpha from Lactococcus lactis subsp. lactis (Streptococcus lactis).